Reading from the N-terminus, the 341-residue chain is Serpentine receptor class epsilon-12 (341 aa).

7 consecutive transmembrane segments (helical) span residues 30-50 (TAFY…LFSA), 57-77 (FTLV…AIIV), 101-121 (AMTF…FSIL), 140-160 (YISY…AILL), 167-187 (IFVV…NQFL), 230-250 (LNFI…SVLF), and 262-282 (ICSL…PQIM).

The protein belongs to the nematode receptor-like protein sre family.

Its subcellular location is the membrane. The sequence is that of Serpentine receptor class epsilon-12 (sre-12) from Caenorhabditis elegans.